The sequence spans 441 residues: Proline--tRNA ligase (441 aa).

This sequence belongs to the class-II aminoacyl-tRNA synthetase family. ProS type 2 subfamily. Homodimer.

It localises to the cytoplasm. It catalyses the reaction tRNA(Pro) + L-proline + ATP = L-prolyl-tRNA(Pro) + AMP + diphosphate. Functionally, catalyzes the attachment of proline to tRNA(Pro) in a two-step reaction: proline is first activated by ATP to form Pro-AMP and then transferred to the acceptor end of tRNA(Pro). This chain is Proline--tRNA ligase, found in Bartonella bacilliformis (strain ATCC 35685 / KC583 / Herrer 020/F12,63).